Here is a 425-residue protein sequence, read N- to C-terminus: 26S proteasome regulatory subunit 7 (425 aa).

Residue 208–215 coordinates ATP; that stretch reads GPPGTGKT.

The protein belongs to the AAA ATPase family.

It is found in the cytoplasm. Its subcellular location is the nucleus. In terms of biological role, the 26S proteasome is involved in the ATP-dependent degradation of ubiquitinated proteins. The regulatory (or ATPase) complex confers ATP dependency and substrate specificity to the 26S complex. The protein is 26S proteasome regulatory subunit 7 (RPT1) of Prunus persica (Peach).